We begin with the raw amino-acid sequence, 217 residues long: Deoxyribose-phosphate aldolase (217 aa).

Aspartate 95 serves as the catalytic Proton donor/acceptor. Lysine 156 serves as the catalytic Schiff-base intermediate with acetaldehyde. Residue lysine 184 is the Proton donor/acceptor of the active site.

This sequence belongs to the DeoC/FbaB aldolase family. DeoC type 1 subfamily.

The protein resides in the cytoplasm. It carries out the reaction 2-deoxy-D-ribose 5-phosphate = D-glyceraldehyde 3-phosphate + acetaldehyde. It participates in carbohydrate degradation; 2-deoxy-D-ribose 1-phosphate degradation; D-glyceraldehyde 3-phosphate and acetaldehyde from 2-deoxy-alpha-D-ribose 1-phosphate: step 2/2. In terms of biological role, catalyzes a reversible aldol reaction between acetaldehyde and D-glyceraldehyde 3-phosphate to generate 2-deoxy-D-ribose 5-phosphate. The chain is Deoxyribose-phosphate aldolase from Thermosynechococcus vestitus (strain NIES-2133 / IAM M-273 / BP-1).